Consider the following 201-residue polypeptide: Small ribosomal subunit protein uS4 (201 aa).

The 64-residue stretch at 91–154 (SRLDNVIYRA…QKMEWFEEAQ (64 aa)) folds into the S4 RNA-binding domain.

It belongs to the universal ribosomal protein uS4 family. As to quaternary structure, part of the 30S ribosomal subunit. Contacts protein S5. The interaction surface between S4 and S5 is involved in control of translational fidelity.

Functionally, one of the primary rRNA binding proteins, it binds directly to 16S rRNA where it nucleates assembly of the body of the 30S subunit. In terms of biological role, with S5 and S12 plays an important role in translational accuracy. In Corynebacterium aurimucosum (strain ATCC 700975 / DSM 44827 / CIP 107346 / CN-1) (Corynebacterium nigricans), this protein is Small ribosomal subunit protein uS4.